The chain runs to 587 residues: Phosphatidylinositol-3-phosphatase SAC1 (587 aa).

The Cytoplasmic segment spans residues 1–520; the sequence is MAATTYERLK…SPLSVPRDLK (520 aa). The SAC domain maps to 122 to 451; sequence MNHVLSMDGF…ANACAKQYAG (330 aa). The essential for phosphatidylinositol-4-phosphate phosphatase activity stretch occupies residues 452 to 587; the sequence is TGALKTDFTR…PRLVQKEKID (136 aa). Lys-456 bears the N6-acetyllysine mark. Residues 521–541 traverse the membrane as a helical segment; sequence FLALPIIMVVAFSMCIICLLM. Topologically, residues 542 to 548 are lumenal; that stretch reads AGDTWTE. A helical membrane pass occupies residues 549-569; that stretch reads TLAYVLFWGVASIGTFFIILY. Residues 570-587 lie on the Cytoplasmic side of the membrane; it reads NGKDFVDAPRLVQKEKID.

In terms of assembly, interacts with TMEM39A. Interacts with SEC23A and SEC24A; this interaction is reduced in the absence of TMEM39A. Interacts with PLEKHA3 and VAPA and/or VAPB to form a ternary complex.

It is found in the endoplasmic reticulum membrane. The protein resides in the golgi apparatus membrane. It catalyses the reaction a 1,2-diacyl-sn-glycero-3-phospho-(1D-myo-inositol-3-phosphate) + H2O = a 1,2-diacyl-sn-glycero-3-phospho-(1D-myo-inositol) + phosphate. The catalysed reaction is a 1,2-diacyl-sn-glycero-3-phospho-(1D-myo-inositol 4-phosphate) + H2O = a 1,2-diacyl-sn-glycero-3-phospho-(1D-myo-inositol) + phosphate. Functionally, phosphoinositide phosphatase which catalyzes the hydrolysis of phosphatidylinositol 4-phosphate (PtdIns(4)P), phosphatidylinositol 3-phosphate (PtdIns(3)P) and has low activity towards phosphatidylinositol-3,5-bisphosphate (PtdIns(3,5)P2). Shows a very robust PtdIns(4)P phosphatase activity when it binds PtdIns(4)P in a 'cis' configuration in the cellular environment, with much less activity seen when it binds PtdIns(4)P in 'trans' configuration. PtdIns(4)P phosphatase activity (when it binds PtdIns(4)P in 'trans' configuration) is enhanced in the presence of PLEKHA3. This is Phosphatidylinositol-3-phosphatase SAC1 (SACM1L) from Bos taurus (Bovine).